Consider the following 389-residue polypeptide: Arrestin-C (389 aa).

The interval 369-389 (AQQEPSGESQEALAAEGNEGS) is disordered.

Belongs to the arrestin family. In terms of assembly, homodimer; disulfide-linked in response to retinal illumination. Interacts with CXCR4; the interaction is dependent on the C-terminal phosphorylation of CXCR4 and modulates the calcium ion mobilization activity of CXCR4. Interacts with GPR84. Expressed in cone photoreceptors in the retina (at protein level).

The protein localises to the photoreceptor inner segment. It localises to the cell projection. The protein resides in the cilium. Its subcellular location is the photoreceptor outer segment. Its function is as follows. May play a role in an as yet undefined retina-specific signal transduction. Could bind to photoactivated-phosphorylated red/green opsins. The chain is Arrestin-C (ARR3) from Bos taurus (Bovine).